Consider the following 369-residue polypeptide: MPRAPKRQRCMPEEDLQSQSETQGLEGAQAPLAVEEDASSSTSTSSSFPSSFPSSSSSSSSSCYPLIPSTPEEVSADDETPNPPQSAQIACSSPSVVASLPLDQSDEGSSSQKEESPSTLQVLPDSESLPRSEIDEKVTDLVQFLLFKYQMKEPITKAEILESVIRNYEDHFPLLFSEASECMLLVFGIDVKEVDPTGHSFVLVTSLGLTYDGMLSDVQSMPKTGILILILSIVFIEGYCTPEEVIWEALNMMGLYDGMEHLIYGEPRKLLTQDWVQENYLEYRQVPGSDPARYEFLWGPRAHAEIRKMSLLKFLAKVNGSDPRSFPLWYEEALKDEEERAQDRIATTDDTTAMASASSSATGSFSYPE.

The disordered stretch occupies residues 1–131; sequence MPRAPKRQRC…VLPDSESLPR (131 aa). Low complexity predominate over residues 39 to 62; that stretch reads SSSTSTSSSFPSSFPSSSSSSSSS. 2 stretches are compositionally biased toward polar residues: residues 85 to 96 and 107 to 121; these read QSAQIACSSPSV and EGSSSQKEESPSTLQ. The MAGE domain maps to 134–333; sequence IDEKVTDLVQ…RSFPLWYEEA (200 aa). Residues 340–369 are disordered; sequence RAQDRIATTDDTTAMASASSSATGSFSYPE. Residues 348–369 show a composition bias toward low complexity; it reads TDDTTAMASASSSATGSFSYPE.

Expressed in many tumors of several types, such as melanoma, head and neck squamous cell carcinoma, lung carcinoma and breast carcinoma, but not in normal tissues except for spermatogonia, spermatocytes and placenta.

The protein localises to the nucleus. Its function is as follows. Not known, though may play a role in embryonal development and tumor transformation or aspects of tumor progression. This Homo sapiens (Human) protein is Melanoma-associated antigen 10 (MAGEA10).